A 448-amino-acid polypeptide reads, in one-letter code: Tubulin beta-2 chain (448 aa).

Residues Gln11, Glu69, Ser138, Gly142, Thr143, Gly144, Asn204, and Asn226 each coordinate GTP. Glu69 contributes to the Mg(2+) binding site. The disordered stretch occupies residues 429–448 (TADEDGYEYEDEEEVGEEDA).

This sequence belongs to the tubulin family. Dimer of alpha and beta chains. A typical microtubule is a hollow water-filled tube with an outer diameter of 25 nm and an inner diameter of 15 nM. Alpha-beta heterodimers associate head-to-tail to form protofilaments running lengthwise along the microtubule wall with the beta-tubulin subunit facing the microtubule plus end conferring a structural polarity. Microtubules usually have 13 protofilaments but different protofilament numbers can be found in some organisms and specialized cells. It depends on Mg(2+) as a cofactor.

The protein resides in the cytoplasm. The protein localises to the cytoskeleton. Tubulin is the major constituent of microtubules, a cylinder consisting of laterally associated linear protofilaments composed of alpha- and beta-tubulin heterodimers. Microtubules grow by the addition of GTP-tubulin dimers to the microtubule end, where a stabilizing cap forms. Below the cap, tubulin dimers are in GDP-bound state, owing to GTPase activity of alpha-tubulin. This Lupinus albus (White lupine) protein is Tubulin beta-2 chain (TUBB2).